Reading from the N-terminus, the 348-residue chain is 2-heptyl-4(1H)-quinolone synthase subunit PqsC (348 aa).

The Acyl-thioester intermediate role is filled by cysteine 129. Histidine 269 is a catalytic residue.

Belongs to the thiolase-like superfamily. FabH family. Forms a tight complex with PqsB.

Its subcellular location is the cytoplasm. It carries out the reaction (2-aminobenzoyl)acetate + octanoyl-CoA + H(+) = 2-heptyl-4(1H)-quinolone + CO2 + CoA + H2O. Its activity is regulated as follows. Folding of PqsC and binding of octanoate are promoted by PqsB. Binding of the octanoyl group probably increases the binding affinity of the complex for 2-ABA. Activity of the complex is inhibited by 2-aminoacetophenone (2-AA). Required for the biosynthesis of the quorum-sensing signaling molecules 2-heptyl-4(1H)-quinolone (HHQ) and 2-heptyl-3-hydroxy-4(1H)-quinolone (Pseudomonas quinolone signal or PQS), which are important for biofilm formation and virulence. The PqsC/PqsB complex catalyzes the condensation of 2-aminobenzoylacetate (2-ABA) and octanoyl-CoA to form HHQ. First, PqsC acquires an octanoyl group from octanoyl-CoA and forms an octanoyl-PqsC intermediate. Then, together with PqsB, it catalyzes the coupling of 2-ABA with the octanoate group, leading to decarboxylation and dehydration, and resulting in closure of the quinoline ring. This is 2-heptyl-4(1H)-quinolone synthase subunit PqsC from Pseudomonas aeruginosa (strain ATCC 15692 / DSM 22644 / CIP 104116 / JCM 14847 / LMG 12228 / 1C / PRS 101 / PAO1).